Consider the following 198-residue polypeptide: 7-methyl-GTP pyrophosphatase (198 aa).

The active-site Proton acceptor is the Asp75.

This sequence belongs to the Maf family. YceF subfamily. The cofactor is a divalent metal cation.

It localises to the cytoplasm. The catalysed reaction is N(7)-methyl-GTP + H2O = N(7)-methyl-GMP + diphosphate + H(+). Nucleoside triphosphate pyrophosphatase that hydrolyzes 7-methyl-GTP (m(7)GTP). May have a dual role in cell division arrest and in preventing the incorporation of modified nucleotides into cellular nucleic acids. This Nitrosospira multiformis (strain ATCC 25196 / NCIMB 11849 / C 71) protein is 7-methyl-GTP pyrophosphatase.